Reading from the N-terminus, the 251-residue chain is Indole-3-glycerol phosphate synthase (251 aa).

The segment covering 1 to 12 (MDDSSSLASPVQ) has biased composition (polar residues). The tract at residues 1-27 (MDDSSSLASPVQSILAAARRRDPPTRR) is disordered.

This sequence belongs to the TrpC family.

The catalysed reaction is 1-(2-carboxyphenylamino)-1-deoxy-D-ribulose 5-phosphate + H(+) = (1S,2R)-1-C-(indol-3-yl)glycerol 3-phosphate + CO2 + H2O. It participates in amino-acid biosynthesis; L-tryptophan biosynthesis; L-tryptophan from chorismate: step 4/5. The sequence is that of Indole-3-glycerol phosphate synthase from Halobacterium salinarum (strain ATCC 700922 / JCM 11081 / NRC-1) (Halobacterium halobium).